A 129-amino-acid chain; its full sequence is Ribosome-binding factor A (129 aa).

Belongs to the RbfA family. As to quaternary structure, monomer. Binds 30S ribosomal subunits, but not 50S ribosomal subunits or 70S ribosomes.

The protein localises to the cytoplasm. Its function is as follows. One of several proteins that assist in the late maturation steps of the functional core of the 30S ribosomal subunit. Associates with free 30S ribosomal subunits (but not with 30S subunits that are part of 70S ribosomes or polysomes). Required for efficient processing of 16S rRNA. May interact with the 5'-terminal helix region of 16S rRNA. This chain is Ribosome-binding factor A, found in Azotobacter vinelandii (strain DJ / ATCC BAA-1303).